The chain runs to 123 residues: ATP synthase epsilon chain (123 aa).

This sequence belongs to the ATPase epsilon chain family. As to quaternary structure, F-type ATPases have 2 components, CF(1) - the catalytic core - and CF(0) - the membrane proton channel. CF(1) has five subunits: alpha(3), beta(3), gamma(1), delta(1), epsilon(1). CF(0) has three main subunits: a, b and c.

The protein localises to the cell inner membrane. Functionally, produces ATP from ADP in the presence of a proton gradient across the membrane. The sequence is that of ATP synthase epsilon chain from Helicobacter pylori (strain P12).